The following is a 343-amino-acid chain: Palmitoyltransferase ZDHHC4 (343 aa).

The Lumenal portion of the chain corresponds to 1–2 (MD). The helical transmembrane segment at 3 to 23 (FLVLFLLYLALVLLGFVMICI) threads the bilayer. The Cytoplasmic segment spans residues 24–67 (GSKTHYLQGLISRGAQVFSYIIPECLQRAMLSVLHYLFHTRNYT). Residues 68-88 (FVVLHLILQGMVYTEYTWEIF) traverse the membrane as a helical segment. Residues 89–95 (GLCQQLE) lie on the Lumenal side of the membrane. Residues 96–116 (FSLYYLFLPYLLLIVNLLFFT) form a helical membrane-spanning segment. Residues 117 to 196 (LSCVTNPGTI…GAWNTRYFLS (80 aa)) lie on the Cytoplasmic side of the membrane. Residues 149 to 199 (VRCPTCDLRKPARSKHCSVCNRCVHRFDHHCVWVNNCIGAWNTRYFLSYLF) enclose the DHHC domain. Cys-179 (S-palmitoyl cysteine intermediate) is an active-site residue. The helical transmembrane segment at 197-217 (YLFTLTASAATMAVVSTVFLV) threads the bilayer. The Lumenal portion of the chain corresponds to 218–255 (RLVVMSDVYLQTYVDDLGHLQVVDTVFLVQYLFLTFPR). A helical membrane pass occupies residues 256–276 (IVFLVGFVVVLSFLLGGYLCF). Residues 277–343 (CLYLAATNQT…ATACYERKEK (67 aa)) are Cytoplasmic-facing. The short motif at 340–343 (RKEK) is the Di-lysine motif element.

This sequence belongs to the DHHC palmitoyltransferase family. As to quaternary structure, interacts with CPT1A.

The protein localises to the endoplasmic reticulum membrane. Its subcellular location is the golgi apparatus membrane. It is found in the cell membrane. The catalysed reaction is L-cysteinyl-[protein] + hexadecanoyl-CoA = S-hexadecanoyl-L-cysteinyl-[protein] + CoA. In terms of biological role, palmitoyltransferase that could catalyze the addition of palmitate onto protein substrates including the D(2) dopamine receptor DRD2, GSK3B or MAVS. Mediates GSK3B palmitoylation to prevent its AKT1-mediated phosphorylation leading to activation of the STAT3 signaling pathway. Also catalyzes MAVS palmitoylation which promotes its stabilization and activation by inhibiting 'Lys-48'- but facilitating 'Lys-63'-linked ubiquitination. The polypeptide is Palmitoyltransferase ZDHHC4 (Bos taurus (Bovine)).